A 123-amino-acid polypeptide reads, in one-letter code: Large ribosomal subunit protein uL18 (123 aa).

The protein belongs to the universal ribosomal protein uL18 family. Part of the 50S ribosomal subunit; part of the 5S rRNA/L5/L18/L25 subcomplex. Contacts the 5S and 23S rRNAs.

Its function is as follows. This is one of the proteins that bind and probably mediate the attachment of the 5S RNA into the large ribosomal subunit, where it forms part of the central protuberance. This chain is Large ribosomal subunit protein uL18, found in Bifidobacterium longum (strain DJO10A).